A 122-amino-acid polypeptide reads, in one-letter code: Large ribosomal subunit protein uL14 (122 aa).

It belongs to the universal ribosomal protein uL14 family. As to quaternary structure, part of the 50S ribosomal subunit. Forms a cluster with proteins L3 and L19. In the 70S ribosome, L14 and L19 interact and together make contacts with the 16S rRNA in bridges B5 and B8.

Functionally, binds to 23S rRNA. Forms part of two intersubunit bridges in the 70S ribosome. The protein is Large ribosomal subunit protein uL14 of Gemmatimonas aurantiaca (strain DSM 14586 / JCM 11422 / NBRC 100505 / T-27).